The chain runs to 968 residues: MVNSSRVQPQQPGDAKRPPAPRAPDPGRLMAGCAAVGASLAAPGGLCEQRGLEIEMQRIRQAAARDPPAGAAASPSPPLSSCSRQAWSRDNPGFEAEEEEEEVEGEEGGMVVEMDVEWRPGSRRSAASSAVSSVGARSRGLGGYHGAGHPSGRRRRREDQGPPCPSPVGGGDPLHRHLPLEGQPPRVAWAERLVRGLRGLWGTRLMEESSTNREKYLKSVLRELVTYLLFLIVLCILTYGMMSSNVYYYTRMMSQLFLDTPVSKTEKTNFKTLSSMEDFWKFTEGSLLDGLYWKMQPSNQTEADNRSFIFYENLLLGVPRIRQLRVRNGSCSIPQDLRDEIKECYDVYSVSSEDRAPFGPRNGTAWIYTSEKDLNGSSHWGIIATYSGAGYYLDLSRTREETAAQVASLKKNVWLDRGTRATFIDFSVYNANINLFCVVRLLVEFPATGGVIPSWQFQPLKLIRYVTTFDFFLAACEIIFCFFIFYYVVEEILEIRIHKLHYFRSFWNCLDVVIVVLSVVAIGINIYRTSNVEVLLQFLEDQNTFPNFEHLAYWQIQFNNIAAVTVFFVWIKLFKFINFNRTMSQLSTTMSRCAKDLFGFAIMFFIIFLAYAQLAYLVFGTQVDDFSTFQECIFTQFRIILGDINFAEIEEANRVLGPIYFTTFVFFMFFILLNMFLAIINDTYSEVKSDLAQQKAEMELSDLIRKGYHKALVKLKLKKNTVDDISESLRQGGGKLNFDELRQDLKGKGHTDAEIEAIFTKYDQDGDQELTEHEHQQMRDDLEKEREDLDLDHSSLPRPMSSRSFPRSLDDSEEDDDEDSGHSSRRRGSISSGVSYEEFQVLVRRVDRMEHSIGSIVSKIDAVIVKLEIMERAKLKRREVLGRLLDGVAEDERLGRDSEIHREQMERLVREELERWESDDAASQISHGLGTPVGLNGQPRPRSSRPSSSQSTEGMEGAGGNGSSNVHV.

The span at 1 to 11 (MVNSSRVQPQQ) shows a compositional bias: polar residues. Disordered stretches follow at residues 1 to 28 (MVNS…DPGR) and 58 to 181 (RIRQ…LPLE). At 1 to 219 (MVNSSRVQPQ…STNREKYLKS (219 aa)) the chain is on the cytoplasmic side. Over residues 62–83 (AAARDPPAGAAASPSPPLSSCS) the composition is skewed to low complexity. Phosphoserine is present on residues S76 and S80. Residues 95-107 (EAEEEEEEVEGEE) show a composition bias toward acidic residues. Positions 123–139 (RRSAASSAVSSVGARSR) are enriched in low complexity. An Omega-N-methylarginine modification is found at R137. Residues 220–241 (VLRELVTYLLFLIVLCILTYGM) traverse the membrane as a helical segment. At 242 to 468 (MSSNVYYYTR…PLKLIRYVTT (227 aa)) the chain is on the extracellular side. N-linked (GlcNAc...) asparagine glycosylation is found at N299 and N305. N-linked (GlcNAc...) (complex) asparagine glycosylation occurs at N328. Cysteines 331 and 344 form a disulfide. N362 and N375 each carry an N-linked (GlcNAc...) asparagine glycan. Residues 469–489 (FDFFLAACEIIFCFFIFYYVV) traverse the membrane as a helical segment. The Cytoplasmic segment spans residues 490–505 (EEILEIRIHKLHYFRS). Residues 506–526 (FWNCLDVVIVVLSVVAIGINI) traverse the membrane as a helical segment. The Extracellular portion of the chain corresponds to 527-552 (YRTSNVEVLLQFLEDQNTFPNFEHLA). The helical transmembrane segment at 553–573 (YWQIQFNNIAAVTVFFVWIKL) threads the bilayer. Q557 contacts cholesterol. Residues 574-597 (FKFINFNRTMSQLSTTMSRCAKDL) lie on the Cytoplasmic side of the membrane. A helical membrane pass occupies residues 598 to 619 (FGFAIMFFIIFLAYAQLAYLVF). Topologically, residues 620-631 (GTQVDDFSTFQE) are extracellular. An intramembrane region (pore-forming) is located at residues 632–646 (CIFTQFRIILGDINF). Residue L641 coordinates Ca(2+). Residues 641–643 (LGD) carry the Selectivity filter motif. Residues 647-654 (AEIEEANR) are Extracellular-facing. A helical membrane pass occupies residues 655-675 (VLGPIYFTTFVFFMFFILLNM). Residues 676–968 (FLAIINDTYS…GGNGSSNVHV (293 aa)) lie on the Cytoplasmic side of the membrane. One can recognise an EF-hand domain in the interval 750 to 785 (HTDAEIEAIFTKYDQDGDQELTEHEHQQMRDDLEKE). D763, D765, D767, E769, and E774 together coordinate Ca(2+). The segment at 764 to 831 (QDGDQELTEH…HSSRRRGSIS (68 aa)) is disordered. A compositionally biased stretch (basic and acidic residues) spans 770 to 795 (LTEHEHQQMRDDLEKEREDLDLDHSS). A compositionally biased stretch (low complexity) spans 796-807 (LPRPMSSRSFPR). A phosphoserine mark is found at S801, S808, S812, and S829. The interval 803 to 822 (RSFPRSLDDSEEDDDEDSGH) is linker. The tract at residues 810 to 821 (DDSEEDDDEDSG) is important for interaction with PACS1 and PACS2. A coiled-coil region spans residues 833 to 872 (GVSYEEFQVLVRRVDRMEHSIGSIVSKIDAVIVKLEIMER). Residues 917 to 968 (ESDDAASQISHGLGTPVGLNGQPRPRSSRPSSSQSTEGMEGAGGNGSSNVHV) are disordered. Residues 938-951 (QPRPRSSRPSSSQS) show a composition bias toward low complexity.

Belongs to the polycystin family. As to quaternary structure, homotetramer. Component of the heterotetrameric polycystin channel complex with PKD1; the tetramer contains one PKD1 chain and three PKD2 chains. Isoform 1 interacts with PKD1 while isoform 3 does not. Interacts with PKD1L1; probably forms a Ca(2+) channel. Interacts with CD2AP. Interacts with HAX1. Interacts with NEK8. Part of a complex containing AKAP5, ADCY5, ADCY6 and PDE4C. Interacts (via C-terminus) with TRPV4 (via C-terminus). Interacts (via C-terminal acidic region) with PACS1 and PACS2; these interactions retain the protein in the endoplasmic reticulum and prevent trafficking to the cell membrane. Interacts with TMEM33. Form a heterotetramer with TRPC1 with a 2:2 stoichiometry; has distinct channel properties separate from PKD2 or TRPC1 homomers alone. Interacts with TMEM120A; TMEM120A inhibits PKD2 channel activity through the physical association of PKD2 with TMEM120A. Interacts (via N-terminus) with RYR2; regulates RYR2 channel activity. Phosphorylated. Phosphorylation is important for protein function; a mutant that lacks the N-terminal phosphorylation sites cannot complement a zebrafish pkd2-deficient mutant. PKD-mediated phosphorylation at the C-terminus regulates its function in the release of Ca(2+) stores from the endoplasmic reticulum. Phosphorylation at Ser-812 regulates PKD2 trafficking. Phosphorylation at Ser-76 is required for PKD2 trafficking to or retention at the lateral plasma membrane. Phosphorylation at Ser-801, Ser-812 and Ser-829 regulates PKD2 channel activity. Post-translationally, N-glycosylated. The four subunits in a tetramer probably differ in the extent of glycosylation; simultaneous glycosylation of all experimentally validated sites would probably create steric hindrance. Thus, glycosylation at Asn-305 is not compatible with glycosylation at Asn-328; only one of these two residues is glycosylated at a given time. In terms of processing, sumoylated by SUMO1; sumoylation regulates PKD2 membrane recycling and is necessary for intravascular pressure-induced arterial contractility. In terms of tissue distribution, detected in fetal and adult kidney. Detected at the thick ascending limb of the loop of Henle, at distal tubules, including the distal convoluted tubule and cortical collecting tubules, with weak staining of the collecting duct. Detected on placenta syncytiotrophoblasts (at protein level). Strongly expressed in ovary, fetal and adult kidney, testis, and small intestine. Not detected in peripheral leukocytes.

It localises to the cell projection. The protein localises to the cilium membrane. It is found in the endoplasmic reticulum membrane. The protein resides in the cell membrane. Its subcellular location is the basolateral cell membrane. It localises to the cytoplasmic vesicle membrane. The protein localises to the golgi apparatus. It is found in the vesicle. The protein resides in the secreted. Its subcellular location is the extracellular exosome. It carries out the reaction K(+)(in) = K(+)(out). It catalyses the reaction Na(+)(in) = Na(+)(out). The catalysed reaction is Ca(2+)(in) = Ca(2+)(out). Its activity is regulated as follows. Channel activity is regulated by phosphorylation. Channel activity is regulated by intracellular Ca(2+). At the endoplasmic reticulum membrane (ER), TMEM33 enhances its channel activity. TMEM120A inhibits the channel activity of PKD2, and mediates mechanosensitivity of the PKD2-TMEM120A channel complex. PKD1/PKD2 complex on the plasma membrane is activated by PKD1 N-terminus. Forms a nonselective cation channel. Can function as a homotetrameric ion channel or can form heteromer with PKD1. Displays distinct function depending on its subcellular localization and regulation by its binding partners. In primary cilium functions as a cation channel, with a preference for monovalent cations over divalent cations that allows K(+), Na(+) and Ca(2+) influx, with low selectivity for Ca(2+). Involved in fluid-flow mechanosensation by the primary cilium in renal epithelium. In the endoplasmic reticulum, likely functions as a K(+) channel to facilitate Ca(2+) release. The heterotetrameric PKD1/PKD2 channel has higher Ca(2+) permeability than homomeric PKD2 channel and acts as a primarily Ca(2+)-permeable channel. Interacts with and acts as a regulator of a number of other channels, such as TRPV4, TRPC1, IP3R, RYR2, ultimately further affecting intracellular signaling, to modulate intracellular Ca(2+) signaling. Together with TRPV4, forms mechano- and thermosensitive channels in cilium. In cardiomyocytes, PKD2 modulates Ca(2+) release from stimulated RYR2 receptors through direct association. Also involved in left-right axis specification via its role in sensing nodal flow; forms a complex with PKD1L1 in cilia to facilitate flow detection in left-right patterning. Acts as a regulator of cilium length together with PKD1. Mediates systemic blood pressure and contributes to the myogenic response in cerebral arteries though vasoconstriction. In Homo sapiens (Human), this protein is Polycystin-2.